Reading from the N-terminus, the 70-residue chain is Brevinin-1MT1 (70 aa).

The signal sequence occupies residues 1-22; it reads MFTLKKSLLLLFFLGTINLSLC. Positions 23–44 are excised as a propeptide; it reads EQERDADEEERRDDDEMDVEVE. C64 and C70 form a disulfide bridge.

This sequence belongs to the frog skin active peptide (FSAP) family. Brevinin subfamily. As to expression, expressed by the skin glands.

It is found in the secreted. Its function is as follows. Antimicrobial peptide with activity against a variety of Gram-negative and Gram-positive bacteria and against fungi. Shows strong hemolytic activity against human erythrocytes. This is Brevinin-1MT1 from Amolops mantzorum (Sichuan torrent frog).